An 865-amino-acid chain; its full sequence is Alanine--tRNA ligase (865 aa).

4 residues coordinate Zn(2+): His554, His558, Cys656, and His660.

The protein belongs to the class-II aminoacyl-tRNA synthetase family. Zn(2+) is required as a cofactor.

The protein localises to the cytoplasm. It catalyses the reaction tRNA(Ala) + L-alanine + ATP = L-alanyl-tRNA(Ala) + AMP + diphosphate. Its function is as follows. Catalyzes the attachment of alanine to tRNA(Ala) in a two-step reaction: alanine is first activated by ATP to form Ala-AMP and then transferred to the acceptor end of tRNA(Ala). Also edits incorrectly charged Ser-tRNA(Ala) and Gly-tRNA(Ala) via its editing domain. This Francisella tularensis subsp. tularensis (strain FSC 198) protein is Alanine--tRNA ligase.